The chain runs to 741 residues: uncharacterized protein (741 aa).

An N-terminal signal peptide occupies residues 1–18 (MKTISILAFLVLARLIEA). 3 disordered regions span residues 142–300 (PKVE…GNVD), 423–528 (EEDE…SEQG), and 646–681 (ETVA…VEDD). A compositionally biased stretch (acidic residues) spans 147-165 (EEEEEEYDGEEDDDDESLT). Low complexity-rich tracts occupy residues 183 to 197 (VEPS…STTE) and 205 to 266 (STTV…SSTT). 2 N-linked (GlcNAc...) asparagine glycosylation sites follow: asparagine 232 and asparagine 241. A compositionally biased stretch (acidic residues) spans 423 to 432 (EEDEIDETET). The span at 433-451 (TESTKTTETTKTTGPAETT) shows a compositional bias: low complexity. 2 N-linked (GlcNAc...) asparagine glycosylation sites follow: asparagine 461 and asparagine 511. Over residues 500-511 (PIDESTESEEPN) the composition is skewed to acidic residues. Over residues 512 to 528 (ESVTVTGDTTTDTSEQG) the composition is skewed to low complexity. Positions 646–656 (ETVAPDTNSPD) are enriched in polar residues. The span at 657–671 (ADQEQPDSVEPDNET) shows a compositional bias: acidic residues. The N-linked (GlcNAc...) asparagine glycan is linked to asparagine 669. Residue asparagine 719 is the site of GPI-anchor amidated asparagine attachment. Residues 720-741 (AANLAGSISLSSGVLLLILMLI) constitute a propeptide, removed in mature form.

The protein resides in the cell membrane. This is an uncharacterized protein from Candida albicans (strain SC5314 / ATCC MYA-2876) (Yeast).